We begin with the raw amino-acid sequence, 21 residues long: Preblooming protein 2 (21 aa).

In terms of biological role, possible mediator for cell division in the blooming process. The protein is Preblooming protein 2 of Prorocentrum triestinum (Red tide alga).